Consider the following 178-residue polypeptide: GTP-dependent dephospho-CoA kinase (178 aa).

Residues D55, V57, D74, K76, and E127 each contribute to the GTP site.

This sequence belongs to the GTP-dependent DPCK family.

The catalysed reaction is 3'-dephospho-CoA + GTP = GDP + CoA + H(+). It functions in the pathway cofactor biosynthesis; coenzyme A biosynthesis. Catalyzes the GTP-dependent phosphorylation of the 3'-hydroxyl group of dephosphocoenzyme A to form coenzyme A (CoA). The chain is GTP-dependent dephospho-CoA kinase from Saccharolobus islandicus (strain Y.G.57.14 / Yellowstone #1) (Sulfolobus islandicus).